Consider the following 253-residue polypeptide: Large ribosomal subunit protein uL4 (253 aa).

The disordered stretch occupies residues 61–107; the sequence is GWGSGRGTSHVPRLVNSSRAARVPHARGGRRAHPPKPEADRSEKVNT. The segment covering 82 to 94 has biased composition (basic residues); it reads RVPHARGGRRAHP. The span at 95–107 shows a compositional bias: basic and acidic residues; sequence PKPEADRSEKVNT.

Belongs to the universal ribosomal protein uL4 family. Part of the 50S ribosomal subunit.

Functionally, one of the primary rRNA binding proteins, this protein initially binds near the 5'-end of the 23S rRNA. It is important during the early stages of 50S assembly. It makes multiple contacts with different domains of the 23S rRNA in the assembled 50S subunit and ribosome. In terms of biological role, forms part of the polypeptide exit tunnel. The protein is Large ribosomal subunit protein uL4 of Methanosarcina barkeri (strain Fusaro / DSM 804).